Here is a 1002-residue protein sequence, read N- to C-terminus: Glutamate receptor ionotropic, NMDA 3B (1002 aa).

An N-terminal signal peptide occupies residues 1-24 (MESVRTLWLSVALALAVGSRVVRG). Topologically, residues 25-574 (HPQPCRVPTR…PIGAFMWPLH (550 aa)) are extracellular. N69, N212, N344, N451, and N465 each carry an N-linked (GlcNAc...) asparagine glycan. 2 disulfides stabilise this stretch: C439–C475 and C445–C476. Glycine is bound by residues S531, S533, and R538. Positions 533 and 538 each coordinate D-serine. The chain crosses the membrane as a helical span at residues 575–594 (WSMWVGVFAALHLTALFLTL). Residues 595–615 (YEWRSPYGLTPRGRNRGTVFS) lie on the Cytoplasmic side of the membrane. An intramembrane region (discontinuously helical) is located at residues 616-627 (YSSALNLCYAIL). At 628 to 641 (FGRTVSSKTPKCPT) the chain is on the cytoplasmic side. Residues 642–661 (GRFLMNLWAIFCLLVLSSYT) form a helical membrane-spanning segment. Residues 662-832 (ANLAAVMVGD…TLQMGVYHFS (171 aa)) lie on the Extracellular side of the membrane. S701 contributes to the glycine binding site. D-serine is bound by residues S701, A702, and D745. D745 contributes to the glycine binding site. A glycan (N-linked (GlcNAc...) asparagine) is linked at N786. A helical membrane pass occupies residues 833-848 (GLFVLLCLGLGSALLT). Topologically, residues 849–1002 (SLGEHVFYRL…RLLHAAPAES (154 aa)) are cytoplasmic. Positions 882–910 (ALNTGPPEGQQERAEQERSGPKDELPATD) are disordered. The span at 891 to 906 (QQERAEQERSGPKDEL) shows a compositional bias: basic and acidic residues. Positions 944–985 (LCSNGPGLQAELRELELRIEAARERLRSALLRRGELRALLGD) form a coiled coil. The interval 951–984 (LQAELRELELRIEAARERLRSALLRRGELRALLG) is involved in the trafficking and surface expression of NMDARs.

Belongs to the glutamate-gated ion channel (TC 1.A.10.1) family. NR3B/GRIN3B subfamily. As to quaternary structure, forms heterotetrameric channels that contain at least two GluN1 subunits and at least a combination of one GluN2 and one GluN3 subunits (in vitro). Forms heterotetrameric channels composed of two GluN1/zeta subunits (GRIN1), and two identical GluN3 subunits (GRIN3A or GRIN3B) (in vitro). Does not form functional homomeric channels. Expressed in the hippocampus, the corpus callosum, in the facial and trigeminal nuclei of the brainstem and the ventral horn of the spinal cord.

The protein localises to the cell membrane. It is found in the postsynaptic cell membrane. The catalysed reaction is Ca(2+)(in) = Ca(2+)(out). The enzyme catalyses Na(+)(in) = Na(+)(out). Excitatory glycine receptors are inhibited by D-serine at a concentrion of 100uM. Its function is as follows. Component of a non-conventional N-methyl-D-aspartate (NMDA) receptors (NMDARs) that function as heterotetrameric, ligand-gated cation channels with low calcium permeability and low voltage-dependent block by Mg(2+). Forms glutamatergic receptor complexes with GluN1 and GluN2 subunits which are activated by glycine binding to the GluN1 and GluN3 subunits and L-glutamate binding to GluN2 subunits. Forms excitatory glycinergic receptor complexes with GluN1 alone which are activated by glycine binding to the GluN1 and GluN3 subunits. GluN3B subunit also binds D-serine and, in the absence of glycine, activates glycinergic receptor complexes, but with lower efficacy than glycine. Each GluN3 subunit confers differential attributes to channel properties, including activation, deactivation and desensitization kinetics, pH sensitivity, Ca2(+) permeability, and binding to allosteric modulators. The sequence is that of Glutamate receptor ionotropic, NMDA 3B from Rattus norvegicus (Rat).